A 307-amino-acid polypeptide reads, in one-letter code: Elongation factor Ts (307 aa).

Residues 80–83 form an involved in Mg(2+) ion dislocation from EF-Tu region; it reads TDFV.

This sequence belongs to the EF-Ts family.

It localises to the cytoplasm. Associates with the EF-Tu.GDP complex and induces the exchange of GDP to GTP. It remains bound to the aminoacyl-tRNA.EF-Tu.GTP complex up to the GTP hydrolysis stage on the ribosome. This is Elongation factor Ts from Bradyrhizobium sp. (strain ORS 278).